A 384-amino-acid chain; its full sequence is Dehydrogenase ALT3 (384 aa).

Belongs to the iron-containing alcohol dehydrogenase family. Requires Fe cation as cofactor.

It functions in the pathway mycotoxin biosynthesis. Its function is as follows. Dehydrogenase; part of the gene cluster that mediates the biosynthesis of the host-selective toxins (HSTs) AAL-toxins, sphinganine-analog mycotoxins responsible for Alternaria stem canker on tomato by the tomato pathotype. The biosynthesis starts with the polyketide synthase ALT1-catalyzed C-16 carbon chain assembly from one starter acetyl-CoA unit with malonyl-CoA extender units. ALT1 also selectively transfers methyl groups at the first and the third cycle of chain elongation for AAL toxin. The C-16 polyketide chain is released from the enzyme by a nucleophilic attack of a carbanion, which is derived from R-carbon of glycin by decarboxylation, on the carbonyl carbon of polyketide acyl chain. This step is probably catalyzed by a pyridoxal 5'-phosphate-dependent aminoacyl transferase ALT4. The respective functions of the other enzymes encoded by the cluster have still to be elucidated. The sphingosine N-acyltransferase-like protein ALT7 seems not to act as a resistance/self-tolerance factor against the toxin in the toxin biosynthetic gene cluster, contrary to what is expected. The polypeptide is Dehydrogenase ALT3 (Alternaria alternata (Alternaria rot fungus)).